Consider the following 144-residue polypeptide: MSRRQARERALQILFQVDVGGADPGEAFRLMDEGFGELKKYQEFARLLVGGTLENLAAIDRVIAGVSKDWNINRMANVDRNIIRMALYEIFFCEDIPYSVSVNEAVELGKTYGGEESGRFINGILGRIVESPEEYRPLIKGSAS.

The protein belongs to the NusB family.

Involved in transcription antitermination. Required for transcription of ribosomal RNA (rRNA) genes. Binds specifically to the boxA antiterminator sequence of the ribosomal RNA (rrn) operons. The sequence is that of Transcription antitermination protein NusB from Pelotomaculum thermopropionicum (strain DSM 13744 / JCM 10971 / SI).